The chain runs to 468 residues: Dihydrolipoyl dehydrogenase (468 aa).

Residues 39–47, Lys56, and Ala119 contribute to the FAD site; that span reads EKGNLGGVC. The cysteines at positions 47 and 52 are disulfide-linked. NAD(+)-binding positions include 183–187, Glu206, and 271–274; these read GGGYI and TVGR. The FAD site is built by Asp314 and Ala322. His446 acts as the Proton acceptor in catalysis.

It belongs to the class-I pyridine nucleotide-disulfide oxidoreductase family. Homodimer. FAD serves as cofactor.

The protein resides in the cytoplasm. Its subcellular location is the membrane. The enzyme catalyses N(6)-[(R)-dihydrolipoyl]-L-lysyl-[protein] + NAD(+) = N(6)-[(R)-lipoyl]-L-lysyl-[protein] + NADH + H(+). Lipoamide dehydrogenase is a component of the alpha-ketoacid dehydrogenase complexes. In Staphylococcus aureus (strain COL), this protein is Dihydrolipoyl dehydrogenase (pdhD).